A 257-amino-acid chain; its full sequence is Triosephosphate isomerase (257 aa).

9–11 (NWK) contributes to the substrate binding site. His97 acts as the Electrophile in catalysis. Glu169 (proton acceptor) is an active-site residue. Substrate is bound by residues Gly175, Ser214, and 235 to 236 (GG).

It belongs to the triosephosphate isomerase family. In terms of assembly, homodimer.

It localises to the cytoplasm. It carries out the reaction D-glyceraldehyde 3-phosphate = dihydroxyacetone phosphate. Its pathway is carbohydrate biosynthesis; gluconeogenesis. It participates in carbohydrate degradation; glycolysis; D-glyceraldehyde 3-phosphate from glycerone phosphate: step 1/1. Its function is as follows. Involved in the gluconeogenesis. Catalyzes stereospecifically the conversion of dihydroxyacetone phosphate (DHAP) to D-glyceraldehyde-3-phosphate (G3P). This Vibrio cholerae serotype O1 (strain ATCC 39315 / El Tor Inaba N16961) protein is Triosephosphate isomerase.